A 239-amino-acid chain; its full sequence is Pyridoxine 5'-phosphate synthase (239 aa).

Asn-7 serves as a coordination point for 3-amino-2-oxopropyl phosphate. 1-deoxy-D-xylulose 5-phosphate is bound at residue 9-10 (DH). Residue Arg-18 coordinates 3-amino-2-oxopropyl phosphate. The active-site Proton acceptor is His-43. Positions 45 and 50 each coordinate 1-deoxy-D-xylulose 5-phosphate. Residue Glu-70 is the Proton acceptor of the active site. Residue Thr-100 participates in 1-deoxy-D-xylulose 5-phosphate binding. His-191 functions as the Proton donor in the catalytic mechanism. Residues Gly-192 and 213–214 (GH) each bind 3-amino-2-oxopropyl phosphate.

This sequence belongs to the PNP synthase family. As to quaternary structure, homooctamer; tetramer of dimers.

It is found in the cytoplasm. The catalysed reaction is 3-amino-2-oxopropyl phosphate + 1-deoxy-D-xylulose 5-phosphate = pyridoxine 5'-phosphate + phosphate + 2 H2O + H(+). The protein operates within cofactor biosynthesis; pyridoxine 5'-phosphate biosynthesis; pyridoxine 5'-phosphate from D-erythrose 4-phosphate: step 5/5. Its function is as follows. Catalyzes the complicated ring closure reaction between the two acyclic compounds 1-deoxy-D-xylulose-5-phosphate (DXP) and 3-amino-2-oxopropyl phosphate (1-amino-acetone-3-phosphate or AAP) to form pyridoxine 5'-phosphate (PNP) and inorganic phosphate. This Citrifermentans bemidjiense (strain ATCC BAA-1014 / DSM 16622 / JCM 12645 / Bem) (Geobacter bemidjiensis) protein is Pyridoxine 5'-phosphate synthase.